Here is a 398-residue protein sequence, read N- to C-terminus: Gastric triacylglycerol lipase (398 aa).

The N-terminal stretch at 1–19 (MWLLLTMASLISVLGTTHG) is a signal peptide. 2 N-linked (GlcNAc...) asparagine glycosylation sites follow: Asn-34 and Asn-99. The AB hydrolase-1 domain occupies 78-377 (PVVFLQHGLL…PFYNHLDFIW (300 aa)). The active-site Nucleophile is the Ser-172. A disulfide bond links Cys-246 and Cys-255. 2 N-linked (GlcNAc...) asparagine glycosylation sites follow: Asn-271 and Asn-327. Residues Asp-343 and His-372 each act as charge relay system in the active site.

This sequence belongs to the AB hydrolase superfamily. Lipase family.

The protein localises to the secreted. It carries out the reaction a triacylglycerol + H2O = a diacylglycerol + a fatty acid + H(+). The enzyme catalyses 1,2,3-tri-(9Z-octadecenoyl)-glycerol + H2O = 1,2-di-(9Z-octadecenoyl)-sn-glycerol + (9Z)-octadecenoate + H(+). The catalysed reaction is 1,2,3-trioctanoylglycerol + H2O = 1,2-dioctanoyl-sn-glycerol + octanoate + H(+). In terms of biological role, catalyzes the hydrolysis of triacylglycerols to yield free fatty acids, diacylglycerol, monoacylglycerol, and glycerol. Shows a preferential hydrolysis at the sn-3 position of triacylglycerol. The sequence is that of Gastric triacylglycerol lipase (LIPF) from Homo sapiens (Human).